The sequence spans 345 residues: S-adenosylmethionine:tRNA ribosyltransferase-isomerase (345 aa).

This sequence belongs to the QueA family. In terms of assembly, monomer.

Its subcellular location is the cytoplasm. The catalysed reaction is 7-aminomethyl-7-carbaguanosine(34) in tRNA + S-adenosyl-L-methionine = epoxyqueuosine(34) in tRNA + adenine + L-methionine + 2 H(+). The protein operates within tRNA modification; tRNA-queuosine biosynthesis. Its function is as follows. Transfers and isomerizes the ribose moiety from AdoMet to the 7-aminomethyl group of 7-deazaguanine (preQ1-tRNA) to give epoxyqueuosine (oQ-tRNA). The chain is S-adenosylmethionine:tRNA ribosyltransferase-isomerase from Acidithiobacillus ferrooxidans (strain ATCC 53993 / BNL-5-31) (Leptospirillum ferrooxidans (ATCC 53993)).